The sequence spans 338 residues: Cytochrome P450 monooxygenase easK (338 aa).

An N-terminal signal peptide occupies residues 1–16 (MLLLTFTLPVVTLLLA). Residues Asn-240 and Asn-327 are each glycosylated (N-linked (GlcNAc...) asparagine).

The protein belongs to the cytochrome P450 family. Requires heme as cofactor.

The protein operates within alkaloid biosynthesis; ergot alkaloid biosynthesis. In terms of biological role, cytochrome P450 monooxygenase; part of the gene cluster that mediates the biosynthesis of fumiclavanine C, a fungal ergot alkaloid. DmaW catalyzes the first step of ergot alkaloid biosynthesis by condensing dimethylallyl diphosphate (DMAP) and tryptophan to form 4-dimethylallyl-L-tryptophan. The second step is catalyzed by the methyltransferase easF that methylates 4-dimethylallyl-L-tryptophan in the presence of S-adenosyl-L-methionine, resulting in the formation of 4-dimethylallyl-L-abrine. The catalase easC and the FAD-dependent oxidoreductase easE then transform 4-dimethylallyl-L-abrine to chanoclavine-I which is further oxidized by EasD in the presence of NAD(+), resulting in the formation of chanoclavine-I aldehyde. EasA reduces chanoclavine-I aldehyde to dihydrochanoclavine-I aldehyde that spontaneously dehydrates to form 6,8-dimethyl-6,7-didehydroergoline. EasG then catalyzes the reduction of 6,8-dimethyl-6,7-didehydroergoline to form festuclavine. Hydrolysis of festuclavine by easM then leads to the formation of fumigaclavine B which is in turn acetylated by easN to fumigaclavine A. Finally, easL catalyzes the conversion of fumigaclavine A into fumigaclavine C by attaching a dimethylallyl moiety to C-2 of the indole nucleus. The role of the cytochrome P450 monooxygenase easK within the cluster has not been identified yet. This is Cytochrome P450 monooxygenase easK from Aspergillus fumigatus (strain ATCC MYA-4609 / CBS 101355 / FGSC A1100 / Af293) (Neosartorya fumigata).